The following is a 62-amino-acid chain: MTQIVVGENEHIESALRRFKREVSKAGIFQDMRKHRHFETPIEKSKRKKLALHKQSKRRFRT.

The tract at residues 43–62 is disordered; it reads EKSKRKKLALHKQSKRRFRT. Basic residues predominate over residues 45-62; the sequence is SKRKKLALHKQSKRRFRT.

Belongs to the bacterial ribosomal protein bS21 family.

This is Small ribosomal subunit protein bS21C from Trichormus variabilis (strain ATCC 29413 / PCC 7937) (Anabaena variabilis).